We begin with the raw amino-acid sequence, 402 residues long: NAD-dependent protein deacetylase sirtuin-7 (402 aa).

The segment at 1 to 23 is disordered; sequence MAAGGGLSRSERKAAERVRRLRE. Positions 9–23 are enriched in basic and acidic residues; it reads RSERKAAERVRRLRE. Positions 83 to 330 constitute a Deacetylase sirtuin-type domain; it reads PEELRRKVRE…QLLMNELGLE (248 aa). Residues 108–127 and 168–171 each bind NAD(+); these read GAGI…NGVW and QNCD. The active-site Proton acceptor is the His188. Positions 196, 199, 226, and 229 each coordinate Zn(2+). Residues 269 to 271, 298 to 300, and Cys316 contribute to the NAD(+) site; these read GSS and NLQ. A disordered region spans residues 355 to 402; that stretch reads SHSRKSLCRSREEAPPGDQSDPLASAPPILGGWFGRGCAKRAKRKKVA. Arg390 carries the asymmetric dimethylarginine; alternate modification. The residue at position 390 (Arg390) is an Omega-N-methylarginine; alternate. The segment covering 392 to 402 has biased composition (basic residues); that stretch reads CAKRAKRKKVA.

Belongs to the sirtuin family. Class IV subfamily. As to quaternary structure, interacts with UBTF and the RNA polymerase I complex. Interacts with components of the B-WICH complex, such as MYBBP1A, SMARCA5/SNF2H and BAZ1B/WSTF. Interacts with ELK4, leading to stabilization at target promoters for H3K18Ac deacetylation. Interacts with histone H2A and/or histone H2B. Interacts with DNMT1. Interacts with SIRT1. It depends on Zn(2+) as a cofactor. Phosphorylated during mitosis. In terms of processing, methylation at Arg-390 by PRMT6 inhibits the H3K18Ac histone deacetylase activity, promoting mitochondria biogenesis and maintaining mitochondria respiration. Post-translationally, ubiquitinated via 'Lys-63'-linked ubiquitin chains. Deubiquitinated by USP7, inhibiting the H3K18Ac histone deacetylase activity and regulating gluconeogenesis. Ubiquitinated by E3 ubiquitin-protein ligase complex containing FBXO7; leading to proteasomal degradation. Detected in liver, spleen and testis. Detected in embryos.

The protein localises to the nucleus. Its subcellular location is the nucleolus. The protein resides in the nucleoplasm. It is found in the chromosome. It localises to the cytoplasm. The enzyme catalyses N(6)-acetyl-L-lysyl-[protein] + NAD(+) + H2O = 2''-O-acetyl-ADP-D-ribose + nicotinamide + L-lysyl-[protein]. The catalysed reaction is N(6)-glutaryl-L-lysyl-[protein] + NAD(+) + H2O = 2''-O-glutaryl-ADP-D-ribose + nicotinamide + L-lysyl-[protein]. It catalyses the reaction N(6)-succinyl-L-lysyl-[protein] + NAD(+) + H2O = 2''-O-succinyl-ADP-D-ribose + nicotinamide + L-lysyl-[protein]. It carries out the reaction N(6)-propanoyl-L-lysyl-[protein] + NAD(+) + H2O = 3''-O-propanoyl-ADP-D-ribose + nicotinamide + L-lysyl-[protein]. The enzyme catalyses N(6)-decanoyl-L-lysyl-[protein] + NAD(+) + H2O = 2''-O-decanoyl-ADP-D-ribose + nicotinamide + L-lysyl-[protein]. NAD-dependent protein-lysine deacetylase and deacylase activities are activated by nucleic acids. Histone deacetylase activity is activated by DNA. Protein-lysine deacylase activity is activated by RNA. H3K18Ac histone deacetylase activity is inhibited by methylation at Arg-390. H3K18Ac histone deacetylase activity is inhibited by deubiquitination by USP7. Functionally, NAD-dependent protein-lysine deacylase that can act both as a deacetylase or deacylase (desuccinylase, depropionylase and deglutarylase), depending on the context. Also acts as a dedecanoylase. Specifically mediates deacetylation of histone H3 at 'Lys-18' (H3K18Ac). In contrast to other histone deacetylases, displays strong preference for a specific histone mark, H3K18Ac, directly linked to control of gene expression. H3K18Ac is mainly present around the transcription start site of genes and has been linked to activation of nuclear hormone receptors; SIRT7 thereby acts as a transcription repressor. Moreover, H3K18 hypoacetylation has been reported as a marker of malignancy in various cancers and seems to maintain the transformed phenotype of cancer cells. Also able to mediate deacetylation of histone H3 at 'Lys-36' (H3K36Ac) in the context of nucleosomes. Also mediates deacetylation of non-histone proteins, such as ATM, CDK9, DDX21, DDB1, FBL, FKBP5/FKBP51, GABPB1, RAN, RRP9/U3-55K and POLR1E/PAF53. Enriched in nucleolus where it stimulates transcription activity of the RNA polymerase I complex. Acts by mediating the deacetylation of the RNA polymerase I subunit POLR1E/PAF53, thereby promoting the association of RNA polymerase I with the rDNA promoter region and coding region. In response to metabolic stress, SIRT7 is released from nucleoli leading to hyperacetylation of POLR1E/PAF53 and decreased RNA polymerase I transcription. Required to restore the transcription of ribosomal RNA (rRNA) at the exit from mitosis. Promotes pre-ribosomal RNA (pre-rRNA) cleavage at the 5'-terminal processing site by mediating deacetylation of RRP9/U3-55K, a core subunit of the U3 snoRNP complex. Mediates 'Lys-37' deacetylation of Ran, thereby regulating the nuclear export of NF-kappa-B subunit RELA/p65. Acts as a regulator of DNA damage repair by mediating deacetylation of ATM during the late stages of DNA damage response, promoting ATM dephosphorylation and deactivation. May also deacetylate p53/TP53 and promotes cell survival, however such data need additional confirmation. Suppresses the activity of the DCX (DDB1-CUL4-X-box) E3 ubiquitin-protein ligase complexes by mediating deacetylation of DDB1, which prevents the interaction between DDB1 and CUL4 (CUL4A or CUL4B). Activates RNA polymerase II transcription by mediating deacetylation of CDK9, thereby promoting 'Ser-2' phosphorylation of the C-terminal domain (CTD) of RNA polymerase II. Deacetylates FBL, promoting histone-glutamine methyltransferase activity of FBL. Acts as a regulator of mitochondrial function by catalyzing deacetylation of GABPB1. Regulates Akt/AKT1 activity by mediating deacetylation of FKBP5/FKBP51. Required to prevent R-loop-associated DNA damage and transcription-associated genomic instability by mediating deacetylation and subsequent activation of DDX21, thereby overcoming R-loop-mediated stalling of RNA polymerases. In addition to protein deacetylase activity, also acts as protein-lysine deacylase. Acts as a protein depropionylase by mediating depropionylation of Osterix (SP7), thereby regulating bone formation by osteoblasts. Acts as a histone deglutarylase by mediating deglutarylation of histone H4 on 'Lys-91' (H4K91glu); a mark that destabilizes nucleosomes by promoting dissociation of the H2A-H2B dimers from nucleosomes. Acts as a histone desuccinylase: in response to DNA damage, recruited to DNA double-strand breaks (DSBs) and catalyzes desuccinylation of histone H3 on 'Lys-122' (H3K122succ), thereby promoting chromatin condensation and DSB repair. Also promotes DSB repair by promoting H3K18Ac deacetylation, regulating non-homologous end joining (NHEJ). Along with its role in DNA repair, required for chromosome synapsis during prophase I of female meiosis by catalyzing H3K18Ac deacetylation. Involved in transcriptional repression of LINE-1 retrotransposon via H3K18Ac deacetylation, and promotes their association with the nuclear lamina. Required to stabilize ribosomal DNA (rDNA) heterochromatin and prevent cellular senescence induced by rDNA instability. Acts as a negative regulator of SIRT1 by preventing autodeacetylation of SIRT1, restricting SIRT1 deacetylase activity. This is NAD-dependent protein deacetylase sirtuin-7 from Mus musculus (Mouse).